A 142-amino-acid polypeptide reads, in one-letter code: Hemoglobin subunit alpha (142 aa).

A Globin domain is found at 2 to 142; sequence VLSAADKGNV…VSTVLTSKYR (141 aa). The residue at position 4 (Ser-4) is a Phosphoserine. Lys-8 and Lys-12 each carry N6-succinyllysine. N6-acetyllysine; alternate is present on Lys-17. At Lys-17 the chain carries N6-succinyllysine; alternate. A Phosphotyrosine modification is found at Tyr-25. Ser-36 is subject to Phosphoserine. Lys-41 carries the N6-succinyllysine modification. Phosphoserine is present on Ser-50. His-59 is an O2 binding site. His-88 is a heme b binding site. At Ser-103 the chain carries Phosphoserine. Thr-109 is subject to Phosphothreonine. Position 125 is a phosphoserine (Ser-125). Thr-135 and Thr-138 each carry phosphothreonine. Phosphoserine is present on Ser-139.

Belongs to the globin family. Heterotetramer of two alpha chains and two beta chains. As to expression, red blood cells.

Its function is as follows. Involved in oxygen transport from the lung to the various peripheral tissues. In terms of biological role, hemopressin acts as an antagonist peptide of the cannabinoid receptor CNR1. Hemopressin-binding efficiently blocks cannabinoid receptor CNR1 and subsequent signaling. This is Hemoglobin subunit alpha (HBA) from Bos taurus (Bovine).